A 328-amino-acid chain; its full sequence is Eukaryotic translation initiation factor 3 subunit I (328 aa).

WD repeat units follow at residues 8–49 (GHER…GTYR), 50–89 (GHNG…ELFT), 146–185 (DGKK…LLKQ), 191–230 (GHKK…LLKT), and 288–327 (GHFG…FNIK).

The protein belongs to the eIF-3 subunit I family. Component of the eukaryotic translation initiation factor 3 (eIF-3) complex.

It is found in the cytoplasm. Its function is as follows. Component of the eukaryotic translation initiation factor 3 (eIF-3) complex, which is involved in protein synthesis of a specialized repertoire of mRNAs and, together with other initiation factors, stimulates binding of mRNA and methionyl-tRNAi to the 40S ribosome. The eIF-3 complex specifically targets and initiates translation of a subset of mRNAs involved in cell proliferation. This Arabidopsis thaliana (Mouse-ear cress) protein is Eukaryotic translation initiation factor 3 subunit I (TIF3I1).